We begin with the raw amino-acid sequence, 362 residues long: Isopentenyl-diphosphate delta-isomerase (362 aa).

6-7 (RK) is a binding site for substrate. FMN contacts are provided by residues 65–67 (SIT), serine 95, and asparagine 124. A substrate-binding site is contributed by 95 to 97 (SQR). Position 158 (glutamine 158) interacts with substrate. A Mg(2+)-binding site is contributed by glutamate 159. Residues lysine 189, threonine 219, 269–271 (GVR), and 290–291 (AL) contribute to the FMN site.

The protein belongs to the IPP isomerase type 2 family. As to quaternary structure, homooctamer. Dimer of tetramers. The cofactor is FMN. NADPH is required as a cofactor. Mg(2+) serves as cofactor.

The protein localises to the cytoplasm. The catalysed reaction is isopentenyl diphosphate = dimethylallyl diphosphate. Involved in the biosynthesis of isoprenoids. Catalyzes the 1,3-allylic rearrangement of the homoallylic substrate isopentenyl (IPP) to its allylic isomer, dimethylallyl diphosphate (DMAPP). The protein is Isopentenyl-diphosphate delta-isomerase of Methanococcoides burtonii (strain DSM 6242 / NBRC 107633 / OCM 468 / ACE-M).